We begin with the raw amino-acid sequence, 252 residues long: Phosphate import ATP-binding protein PstB 1 (252 aa).

Residues 6 to 247 (LQVSDLSVYY…PKHKETEDYI (242 aa)) form the ABC transporter domain. 38-45 (GPSGSGKS) serves as a coordination point for ATP.

The protein belongs to the ABC transporter superfamily. Phosphate importer (TC 3.A.1.7) family. As to quaternary structure, the complex is composed of two ATP-binding proteins (PstB), two transmembrane proteins (PstC and PstA) and a solute-binding protein (PstS).

It localises to the cell membrane. The enzyme catalyses phosphate(out) + ATP + H2O = ADP + 2 phosphate(in) + H(+). Functionally, part of the ABC transporter complex PstSACB involved in phosphate import. Responsible for energy coupling to the transport system. This Streptococcus agalactiae serotype Ia (strain ATCC 27591 / A909 / CDC SS700) protein is Phosphate import ATP-binding protein PstB 1.